Consider the following 347-residue polypeptide: Guanine nucleotide-binding protein alpha-5 subunit (347 aa).

Glycine 2 carries N-myristoyl glycine lipidation. Cysteine 3 carries the S-palmitoyl cysteine lipid modification. Residues 27-347 form the G-alpha domain; sequence NETKLLLLGP…KNIFNTIINY (321 aa). The tract at residues 30–43 is G1 motif; sequence KLLLLGPGESGKST. GTP is bound by residues 35 to 42, 170 to 176, 195 to 199, 264 to 267, and alanine 319; these read GPGESGKS, LRSRVRT, DVGGQ, and NKVD. 2 residues coordinate Mg(2+): serine 42 and threonine 176. A G2 motif region spans residues 168–176; that stretch reads DVLRSRVRT. The tract at residues 191-200 is G3 motif; sequence FRMLDVGGQR. A G4 motif region spans residues 260–267; it reads IIFFNKVD. The tract at residues 317–322 is G5 motif; the sequence is TCAIDT.

The protein belongs to the G-alpha family. G(q) subfamily. G proteins are composed of 3 units; alpha, beta and gamma. The alpha chain contains the guanine nucleotide binding site.

Its function is as follows. Guanine nucleotide-binding proteins (G proteins) are involved as modulators or transducers in various transmembrane signaling systems. The protein is Guanine nucleotide-binding protein alpha-5 subunit (gpaE) of Dictyostelium discoideum (Social amoeba).